The primary structure comprises 456 residues: uncharacterized protein (456 aa).

Positions 3–61 (TIKKNEVKTGKVIDLTHEGHGVVKVDRYPIFIPNALIDEEIKFKLIKVKKNFAIGKLIE) constitute a TRAM domain. Residues Cys-74, Cys-80, Cys-83, and Cys-162 each coordinate [4Fe-4S] cluster. S-adenosyl-L-methionine contacts are provided by Gln-286, Tyr-315, Glu-336, and Asp-384. Cys-411 acts as the Nucleophile in catalysis.

Belongs to the class I-like SAM-binding methyltransferase superfamily. RNA M5U methyltransferase family.

This is an uncharacterized protein from Staphylococcus epidermidis (strain ATCC 12228 / FDA PCI 1200).